Here is a 187-residue protein sequence, read N- to C-terminus: Probable carboxylesterase Culp7 (187 aa).

A disulfide bridge connects residues Cys-15 and Cys-69. The active-site Nucleophile is Ser-80. Residues Cys-151 and Cys-158 are joined by a disulfide bond. Asp-155 is an active-site residue. Catalysis depends on His-167, which acts as the Proton donor/acceptor.

This sequence belongs to the cutinase family.

The protein localises to the cytoplasm. Its subcellular location is the cell membrane. The protein resides in the secreted. It localises to the cell wall. Functionally, may have a role in cell wall processes. Does not exhibit cutinase activity. The chain is Probable carboxylesterase Culp7 from Mycobacterium tuberculosis (strain ATCC 25618 / H37Rv).